The sequence spans 665 residues: UvrABC system protein C (665 aa).

Residues 16 to 95 (ESPGVYRFRD…IKQYDPRFNV (80 aa)) enclose the GIY-YIG domain. A UVR domain is found at 208–243 (DLMVRRLEREMADASAELEFERAARLRDDLAALRRA). The segment at 470–507 (EAGVESAGDPATPAGPASTGPGVPDEPRVGTLVDPTTG) is disordered. Residues 475-491 (SAGDPATPAGPASTGPG) are compositionally biased toward low complexity.

It belongs to the UvrC family. Interacts with UvrB in an incision complex.

The protein localises to the cytoplasm. Its function is as follows. The UvrABC repair system catalyzes the recognition and processing of DNA lesions. UvrC both incises the 5' and 3' sides of the lesion. The N-terminal half is responsible for the 3' incision and the C-terminal half is responsible for the 5' incision. The protein is UvrABC system protein C of Salinispora tropica (strain ATCC BAA-916 / DSM 44818 / JCM 13857 / NBRC 105044 / CNB-440).